We begin with the raw amino-acid sequence, 86 residues long: Large ribosomal subunit protein bL31B (86 aa).

This sequence belongs to the bacterial ribosomal protein bL31 family. Type B subfamily. Part of the 50S ribosomal subunit.

This is Large ribosomal subunit protein bL31B from Citrobacter koseri (strain ATCC BAA-895 / CDC 4225-83 / SGSC4696).